The primary structure comprises 171 residues: S-ribosylhomocysteine lyase (171 aa).

3 residues coordinate Fe cation: histidine 54, histidine 58, and cysteine 128.

This sequence belongs to the LuxS family. As to quaternary structure, homodimer. The cofactor is Fe cation.

It catalyses the reaction S-(5-deoxy-D-ribos-5-yl)-L-homocysteine = (S)-4,5-dihydroxypentane-2,3-dione + L-homocysteine. Involved in the synthesis of autoinducer 2 (AI-2) which is secreted by bacteria and is used to communicate both the cell density and the metabolic potential of the environment. The regulation of gene expression in response to changes in cell density is called quorum sensing. Catalyzes the transformation of S-ribosylhomocysteine (RHC) to homocysteine (HC) and 4,5-dihydroxy-2,3-pentadione (DPD). The sequence is that of S-ribosylhomocysteine lyase from Salmonella agona (strain SL483).